The primary structure comprises 616 residues: Probable Xaa-Pro aminopeptidase P (616 aa).

Mn(2+) is bound by residues D413, D424, E522, and E536.

It belongs to the peptidase M24B family. Mn(2+) is required as a cofactor.

It catalyses the reaction Release of any N-terminal amino acid, including proline, that is linked to proline, even from a dipeptide or tripeptide.. In terms of biological role, catalyzes the removal of a penultimate prolyl residue from the N-termini of peptides. In Paracoccidioides brasiliensis (strain Pb18), this protein is Probable Xaa-Pro aminopeptidase P (AMPP).